Reading from the N-terminus, the 370-residue chain is Cytochrome b (370 aa).

Transmembrane regions (helical) follow at residues 30 to 50, 74 to 96, 109 to 129, and 175 to 195; these read FGSMLGMVLIFQILTGTFLAF, WVFRIFHFNGASLFFIFLYLHIF, VWMSGLTIYLLVMMEAFMGYV, and FFVLHFLLPWAILVIVLGHLI. Residues His80 and His94 each coordinate heme b. Residues His179 and His193 each contribute to the heme b site. An a ubiquinone-binding site is contributed by His198. The next 4 helical transmembrane spans lie at 221 to 240, 284 to 304, 316 to 336, and 342 to 362; these read YLGKDAYNIVIWLLFIVLSL, VLGVIALLMSIVTFYFFALVN, FLVFMFIISSTILSWLGQCTV, and ILSPLFSFIYFGLAYLMLFIF.

Belongs to the cytochrome b family. The main subunits of complex b-c1 are: cytochrome b, cytochrome c1 and the Rieske protein. The cofactor is heme b.

Its subcellular location is the mitochondrion inner membrane. In terms of biological role, component of the ubiquinol-cytochrome c reductase complex (complex III or cytochrome b-c1 complex) that is part of the mitochondrial respiratory chain. The b-c1 complex mediates electron transfer from ubiquinol to cytochrome c. Contributes to the generation of a proton gradient across the mitochondrial membrane that is then used for ATP synthesis. The protein is Cytochrome b of Caenorhabditis elegans.